The following is a 493-amino-acid chain: Transcript termination protein A18 (493 aa).

The Helicase ATP-binding domain maps to 100–256 (MIESKRPLYI…NSIINIAKLS (157 aa)). 113–120 (LACGFGKT) contributes to the ATP binding site. Positions 206–209 (DESH) match the DESH box motif.

The protein belongs to the helicase family. Poxviruses subfamily. As to quaternary structure, interacts with G2. Might be part of a transcription complex composed at least of G2, A18, and H5.

The protein localises to the virion. In terms of biological role, DNA helicase which seems to act as a postreplicative transcription termination factor. Involved in ATP-dependent release of nascent RNA. Forms a stable complex with single-stranded DNA, and to a lesser extent RNA. This is Transcript termination protein A18 from Rabbitpox virus (strain Utrecht) (RPV).